A 471-amino-acid polypeptide reads, in one-letter code: MGKLHSKPAAVCKRRESPEGDSFAVSAAWARKGIEEWIGRQRCPGSVSGPRQLRLAGTVGRGTRELVGDTSREALGEEDEDDFPLEVALPPEKIDSLGSGDEKRMERLSEPGQASKKQLKFEELQCDVSVEEDSRQEWTFTLYDFDNNGKVTREDITSLLHTIYEVVDSSVNHSPTSSKTLRVKLTVAPDGSQSKRSVLFNHTDLQSTRPRADTKPAEELRGWEKKQRAPLRFQGDSHLEQPDCYHHCVDENIERRNHYLDLAGIENYTSQFGPGSPSVAQKSELPPRISNPTRSRSHEPEAAHIPHRRPQGVDPGSFHLLDTPFAKASELQQRLRGTQDGSKHFVRSPKAQGKNMGMGHGARGARSKPPLVPTTHTVSPSAHLATSPALLPTLAPLGHKKHKHRAKESQASCRGLQGPLAAGGSTVMGREQVRELPAVVVYESQAGQAVQRHEHHHHHEHHHHYHHFYQP.

Disordered stretches follow at residues 1–23 (MGKLHSKPAAVCKRRESPEGDSF) and 41–82 (QRCP…DEDD). Gly2 is lipidated: N-myristoyl glycine. Basic and acidic residues predominate over residues 62–75 (GTRELVGDTSREAL). The segment at 125 to 190 (QCDVSVEEDS…LRVKLTVAPD (66 aa)) is interaction with DVL1, DVL2 and DVL3. Positions 131 to 166 (EEDSRQEWTFTLYDFDNNGKVTREDITSLLHTIYEV) constitute an EF-hand domain. Positions 144, 146, 148, 150, and 155 each coordinate Ca(2+). 3 disordered regions span residues 273-314 (GPGS…QGVD), 337-382 (GTQD…SPSA), and 448-471 (QAVQRHEHHHHHEHHHHYHHFYQP). Over residues 453-471 (HEHHHHHEHHHHYHHFYQP) the composition is skewed to basic residues.

Belongs to the NKD family. As to quaternary structure, interacts with DVL1, DVL2, DVL3 and PPP2R3A. In terms of tissue distribution, highly expressed in lung. Also expressed in brain, heart, kidney, liver, skin, stomach and testis. Within the testis expression is found in the seminiferous epithelium and round and elongating spermatids.

It is found in the cell membrane. Its subcellular location is the cytoplasm. Functionally, cell autonomous antagonist of the canonical Wnt signaling pathway. May activate a second Wnt signaling pathway that controls planar cell polarity. Required for spermatogenesis. In Mus musculus (Mouse), this protein is Protein naked cuticle homolog 1 (Nkd1).